We begin with the raw amino-acid sequence, 396 residues long: Elongation factor Tu (396 aa).

The 197-residue stretch at 10-206 (KPHCNIGTIG…NVDEYIPQPE (197 aa)) folds into the tr-type G domain. Residues 19-26 (GHVDHGKT) form a G1 region. 19–26 (GHVDHGKT) is a binding site for GTP. T26 contributes to the Mg(2+) binding site. The G2 stretch occupies residues 60–64 (GITIS). Residues 81–84 (DCPG) form a G3 region. Residues 81-85 (DCPGH) and 136-139 (NKCD) contribute to the GTP site. A G4 region spans residues 136-139 (NKCD). The tract at residues 174 to 176 (SAL) is G5.

The protein belongs to the TRAFAC class translation factor GTPase superfamily. Classic translation factor GTPase family. EF-Tu/EF-1A subfamily. Monomer.

It is found in the cytoplasm. The catalysed reaction is GTP + H2O = GDP + phosphate + H(+). Its function is as follows. GTP hydrolase that promotes the GTP-dependent binding of aminoacyl-tRNA to the A-site of ribosomes during protein biosynthesis. The protein is Elongation factor Tu of Afipia carboxidovorans (strain ATCC 49405 / DSM 1227 / KCTC 32145 / OM5) (Oligotropha carboxidovorans).